The primary structure comprises 407 residues: Putative metabolite transport protein HI_1104 (407 aa).

Residues 1–16 are Cytoplasmic-facing; it reads MTNKVNSYGWKALIGS. Residues 17–37 form a helical membrane-spanning segment; sequence AVGYGMDGFDLLILGFMLSAI. Over 38-48 the chain is Periplasmic; the sequence is SADLNLTPAQG. The chain crosses the membrane as a helical span at residues 49–69; the sequence is GSLVTWTLIGAVFGGILFGAL. Residues 70–77 are Cytoplasmic-facing; that stretch reads SDKYGRVR. The chain crosses the membrane as a helical span at residues 78–98; sequence VLTWTILLFAVFTGLCAIAQG. The Periplasmic portion of the chain corresponds to 99 to 107; sequence YWDLLIYRT. A helical transmembrane segment spans residues 108-128; sequence IAGIGLGGEFGIGMALAAEAW. The Cytoplasmic portion of the chain corresponds to 129-138; that stretch reads PARHRAKAAS. The chain crosses the membrane as a helical span at residues 139–159; the sequence is YVALGWQVGVLGAALLTPLLL. A topological domain (periplasmic) is located at residue proline 160. A helical membrane pass occupies residues 161 to 181; it reads HIGWRGMFLVGIFPAFVAWFL. Over 182 to 224 the chain is Cytoplasmic; the sequence is RSHLHEPEIFTQKQTALSTQSSFTDKLRSFQLLIKDKATSKIS. The chain crosses the membrane as a helical span at residues 225–245; it reads LGIVVLTSVQNFGYYGIMIWL. At 246–261 the chain is on the periplasmic side; sequence PNFLSKQLGFSLTKSG. The helical transmembrane segment at 262 to 282 threads the bilayer; sequence LWTAVTVCGMMAGIWIFGQLA. Over 283–288 the chain is Cytoplasmic; sequence DRIGRK. A helical transmembrane segment spans residues 289 to 309; that stretch reads PSFLLFQLGAVISIVVYSQLT. Topologically, residues 310–312 are periplasmic; the sequence is DPD. The helical transmembrane segment at 313 to 333 threads the bilayer; the sequence is IMLLAGAFLGMFVNGMLGGYG. The Cytoplasmic segment spans residues 334 to 357; the sequence is ALMAEAYPTEARATAQNVLFNIGR. 2 helical membrane-spanning segments follow: residues 358-378 and 379-399; these read AVGGFGPVVVGSVVLAYSFQT and AIALLAIIYVIDMLATIFLIP. Topologically, residues 400–407 are cytoplasmic; that stretch reads ELKGKALD.

It belongs to the major facilitator superfamily. Aromatic acid:H(+) symporter (AAHS) (TC 2.A.1.15) family.

The protein resides in the cell inner membrane. In Haemophilus influenzae (strain ATCC 51907 / DSM 11121 / KW20 / Rd), this protein is Putative metabolite transport protein HI_1104.